A 521-amino-acid polypeptide reads, in one-letter code: MKTRCFCLAAFSGILTTLAIPNEIKETGYSILGFVAYVPLFIALNKLEDKKALMGLTVFYFIIANSLQNFWLGFFHAFGWITFIGVIIGYIPYSLTLGYFLYYSLKSFKNKTMSITMLFTFYDYSRSIGFLAYPWGLAAFTVNNFNNLIQIADIFGVFFVSFAVYFLNSGIADFLIHKNKTNLLNIAFPTLLITASFTYGMIKKIELKNLLAKEIDSLNIAAIQLNTDPWLPGNDKKGIRDSIEITEQALKENPKIEFVIWSEGVLTYPFSKEDQHFKSSDLHNELKNFIKEHKIPFAIGAPSNLDKAIGIQQNSIYMVEPNLNITNIYSKIFLVPFAEKIPFYEYKFVRNFFLKNFRILGQIEGNKIEILKLKKFKFAPLICYDDAFPELSRFYKTQGANILVNFSNDSWSKTNSAEWQHFVVAKFRSIENGIKTIRATNSGITATINEYGETIKKLETFKKGYLLSTVKLSPTFTTIYEKIGDSFIHILVMMFLITTLRFQFMEDKNQLLSSSVVKIKV.

5 helical membrane-spanning segments follow: residues 24-44, 71-91, 128-148, 151-171, and 182-202; these read IKET…FIAL, WLGF…IGYI, IGFL…FNNL, IADI…NSGI, and NLLN…YGMI. Positions 218 to 472 constitute a CN hydrolase domain; sequence LNIAAIQLNT…KGYLLSTVKL (255 aa). The active-site Proton acceptor is the E263. K331 is a catalytic residue. Residue C383 is the Nucleophile of the active site.

Belongs to the CN hydrolase family. Apolipoprotein N-acyltransferase subfamily.

The protein localises to the cell inner membrane. The catalysed reaction is N-terminal S-1,2-diacyl-sn-glyceryl-L-cysteinyl-[lipoprotein] + a glycerophospholipid = N-acyl-S-1,2-diacyl-sn-glyceryl-L-cysteinyl-[lipoprotein] + a 2-acyl-sn-glycero-3-phospholipid + H(+). The protein operates within protein modification; lipoprotein biosynthesis (N-acyl transfer). In terms of biological role, catalyzes the phospholipid dependent N-acylation of the N-terminal cysteine of apolipoprotein, the last step in lipoprotein maturation. This Borreliella burgdorferi (strain ATCC 35210 / DSM 4680 / CIP 102532 / B31) (Borrelia burgdorferi) protein is Apolipoprotein N-acyltransferase.